A 424-amino-acid chain; its full sequence is Serine hydroxymethyltransferase 2 (424 aa).

(6S)-5,6,7,8-tetrahydrofolate-binding positions include L125 and 129-131 (GHL). An N6-(pyridoxal phosphate)lysine modification is found at K234. Residue E250 coordinates (6S)-5,6,7,8-tetrahydrofolate.

It belongs to the SHMT family. Homodimer. Requires pyridoxal 5'-phosphate as cofactor.

Its subcellular location is the cytoplasm. The catalysed reaction is (6R)-5,10-methylene-5,6,7,8-tetrahydrofolate + glycine + H2O = (6S)-5,6,7,8-tetrahydrofolate + L-serine. It participates in one-carbon metabolism; tetrahydrofolate interconversion. The protein operates within amino-acid biosynthesis; glycine biosynthesis; glycine from L-serine: step 1/1. In terms of biological role, catalyzes the reversible interconversion of serine and glycine with tetrahydrofolate (THF) serving as the one-carbon carrier. This reaction serves as the major source of one-carbon groups required for the biosynthesis of purines, thymidylate, methionine, and other important biomolecules. Also exhibits THF-independent aldolase activity toward beta-hydroxyamino acids, producing glycine and aldehydes, via a retro-aldol mechanism. The protein is Serine hydroxymethyltransferase 2 of Burkholderia mallei (strain ATCC 23344).